The sequence spans 563 residues: Nigrin b (563 aa).

The signal sequence occupies residues 1 to 25 (MRVVAAAMLYFYIVVLAICSVGIQG). Residue Glu188 is part of the active site. Asn221 carries an N-linked (GlcNAc...) asparagine glycan. Cystine bridges form between Cys274–Cys302, Cys319–Cys338, and Cys360–Cys377. Ricin B-type lectin domains lie at 305-431 (RTSF…WTVT) and 434-559 (VKPI…WVTQ). One copy of the 1-alpha repeat lies at 316-356 (DGLCVDVRNGYDTDGTPLQLWPCGTQRNQRWTFDSDDTIRS). The 1-beta repeat unit spans residues 357 to 397 (MGKCMTANGLNNGSNIVIFNCSTAAENAIKWEVPIDGSIIN). N-linked (GlcNAc...) asparagine glycans are attached at residues Asn368 and Asn376. The stretch at 400–432 (SGLVMTAPRAASRTILLLEDNIYAASQGWTVTN) is one 1-gamma repeat. Residues 445-482 (KEMCLQSNGENNGVWMEDCEATSLQQQWALYGDRTIRV) form a 2-alpha repeat. Cys448 and Cys463 form a disulfide bridge. A glycan (N-linked (GlcNAc...) asparagine) is linked at Asn483. One copy of the 2-beta repeat lies at 486-524 (RGLCVTTNGYNSKDLIIILKCQGLPSQRWFFNSDGAIVN). Cys489 and Cys506 are joined by a disulfide. One copy of the 2-gamma repeat lies at 527–554 (SRHVMDVRASNVSLREIIIFPATGNPNQ). N-linked (GlcNAc...) asparagine glycosylation occurs at Asn537.

This sequence in the N-terminal section; belongs to the ribosome-inactivating protein family. Type 2 RIP subfamily. As to quaternary structure, disulfide-linked dimer of A and B chains.

The catalysed reaction is Endohydrolysis of the N-glycosidic bond at one specific adenosine on the 28S rRNA.. Non-toxic type 2 RIP which strongly inhibits mammalian protein synthesis but does not affect plant nor bacterial protein synthesis. The A chain is responsible for inhibiting protein synthesis through the catalytic inactivation of 60S ribosomal subunits by removing adenine from position 4,324 of 28S rRNA. Functionally, the B chain is a galactose-specific lectin that facilitates the binding of nigrin b to the cell membrane that precedes endocytosis. The protein is Nigrin b of Sambucus nigra (European elder).